Here is a 605-residue protein sequence, read N- to C-terminus: UvrABC system protein C (605 aa).

Positions 14–92 (QSCGVYKMVG…IKSLKPLYNI (79 aa)) constitute a GIY-YIG domain. The region spanning 202 to 237 (KEVKEQLLFTMRKCSSEENYELAAIYRDRVKFLEQI) is the UVR domain.

This sequence belongs to the UvrC family. As to quaternary structure, interacts with UvrB in an incision complex.

Its subcellular location is the cytoplasm. The UvrABC repair system catalyzes the recognition and processing of DNA lesions. UvrC both incises the 5' and 3' sides of the lesion. The N-terminal half is responsible for the 3' incision and the C-terminal half is responsible for the 5' incision. The protein is UvrABC system protein C of Wolbachia sp. subsp. Drosophila simulans (strain wRi).